The sequence spans 476 residues: UDP-N-acetylmuramate--L-alanine ligase (476 aa).

Glycine 115–threonine 121 provides a ligand contact to ATP.

This sequence belongs to the MurCDEF family.

It localises to the cytoplasm. The enzyme catalyses UDP-N-acetyl-alpha-D-muramate + L-alanine + ATP = UDP-N-acetyl-alpha-D-muramoyl-L-alanine + ADP + phosphate + H(+). The protein operates within cell wall biogenesis; peptidoglycan biosynthesis. Functionally, cell wall formation. This chain is UDP-N-acetylmuramate--L-alanine ligase, found in Paramagnetospirillum magneticum (strain ATCC 700264 / AMB-1) (Magnetospirillum magneticum).